A 332-amino-acid chain; its full sequence is T-cell leukemia homeobox protein 1 (332 aa).

Positions 203-262 form a DNA-binding region, homeobox; that stretch reads KKKPRTSFTRLQICELEKRFHRQKYLASAERAALAKALKMTDAQVKTWFQNRRTKWRRQT. Lysine 238 is modified (N6-acetyllysine).

Expressed in various embryonic tissues, including branchial arches, some component of the nervous system and spleen.

The protein localises to the nucleus. Its function is as follows. Controls the genesis of the spleen. Binds to the DNA sequence 5'-GGCGGTAAGTGG-3'. In Mus musculus (Mouse), this protein is T-cell leukemia homeobox protein 1 (Tlx1).